The primary structure comprises 873 residues: DNA mismatch repair protein MutS (873 aa).

625–632 (GPNMGGKS) provides a ligand contact to ATP.

It belongs to the DNA mismatch repair MutS family.

Functionally, this protein is involved in the repair of mismatches in DNA. It is possible that it carries out the mismatch recognition step. This protein has a weak ATPase activity. This is DNA mismatch repair protein MutS from Xanthomonas oryzae pv. oryzae (strain KACC10331 / KXO85).